We begin with the raw amino-acid sequence, 366 residues long: Inhibin alpha chain (366 aa).

A signal peptide spans 1 to 20 (MVSQRSLLLLLLLTLRDVDS). The propeptide occupies 21-63 (CQGPELVRELVLAKVKALFLDALGPPAMDGEGGDPGIRRLPRR). A propeptide spans 64-233 (HAVGGFMHRT…APSAGERARR (170 aa)) (inhibin alpha N-terminal region). N-linked (GlcNAc...) asparagine glycans are attached at residues asparagine 147 and asparagine 269. Intrachain disulfides connect cysteine 263–cysteine 328, cysteine 292–cysteine 363, and cysteine 296–cysteine 365.

The protein belongs to the TGF-beta family. In terms of assembly, dimeric, linked by one or more disulfide bonds. Activin B is a dimer of alpha and beta-B. Inhibin A is a dimer of alpha and beta-A. Inhibin B is a dimer of alpha and beta-B. Interacts with TGFBR3L; this interaction regulates female fertility. In terms of processing, proteolytic processing yields a number of bioactive forms, consisting either solely of the mature alpha chain, of the most N-terminal propeptide linked through a disulfide bond to the mature alpha chain, or of the entire proprotein.

It localises to the secreted. Inhibins and activins inhibit and activate, respectively, the secretion of follitropin by the pituitary gland. Inhibins/activins are involved in regulating a number of diverse functions such as hypothalamic and pituitary hormone secretion, gonadal hormone secretion, germ cell development and maturation, erythroid differentiation, insulin secretion, nerve cell survival, embryonic axial development or bone growth, depending on their subunit composition. Inhibins appear to oppose the functions of activins. Its function is as follows. Inhibin A is a dimer of alpha/INHA and beta-A/INHBA that functions as a feedback regulator in the hypothalamic-pituitary-gonadal (HPG) axis. Inhibits the secretion of FSH from the anterior pituitary gland by acting on pituitary gonadotrope cells. Antagonizes activin A by binding to the proteoglycan, betaglycan, and forming a stable complex with and, thereby, sequestering type II activin receptors while excluding type I receptor. Functionally, inhibin B is a dimer of alpha and beta-B that plays a crucial role in the regulation of the reproductive system by inhibiting the secretion of follicle-stimulating hormone (FSH) from the anterior pituitary gland. Thereby, maintains reproductive homeostasis in both males and females. Acts as a more potent suppressor of FSH release than inhibin A. Functions as competitive receptor antagonist binding activin type II receptors with high affinity in the presence of the TGF-beta type III coreceptor/TGFBR3L. This is Inhibin alpha chain (Inha) from Mus musculus (Mouse).